The primary structure comprises 384 residues: Spermidine/putrescine import ATP-binding protein PotA (384 aa).

The ABC transporter domain occupies 26–260 (ISLEKVSKTY…PATRFVAGFI (235 aa)). ATP is bound at residue 62–69 (GPSGCGKT).

The protein belongs to the ABC transporter superfamily. Spermidine/putrescine importer (TC 3.A.1.11.1) family. As to quaternary structure, the complex is composed of two ATP-binding proteins (PotA), two transmembrane proteins (PotB and PotC) and a solute-binding protein (PotD).

The protein resides in the cell membrane. The catalysed reaction is ATP + H2O + polyamine-[polyamine-binding protein]Side 1 = ADP + phosphate + polyamineSide 2 + [polyamine-binding protein]Side 1.. Functionally, part of the ABC transporter complex PotABCD involved in spermidine/putrescine import. Responsible for energy coupling to the transport system. This Thermobifida fusca (strain YX) protein is Spermidine/putrescine import ATP-binding protein PotA.